The primary structure comprises 309 residues: MVKVYAPASSANMSVGFDVLGAAVTPVDGALLGDVVSVEAADSFSLNNLGRFADKLPPEPRENIVYQCWERFCHALGKTIPVAMTLEKNMPIGSGLGSSACSVVAALVAMNEHCGKPLNDTRLLAMMGELEGRISGSVHYDNVAPCFLGGMQLMIEENGIISQQIPGFDEWLWVLAYPGIKVSTAEARAILPAQYRRQDCIAHGRHLAGFIHACYSRQPQLAAALMKDVIAEPYRARLLPGFSQARQAVAEIGALASGISGSGPTLFALCDKPETAQRVADWLSKHYLQNQEGFVHICRLDTAGARVLG.

91–101 is a binding site for ATP; that stretch reads PIGSGLGSSAC.

The protein belongs to the GHMP kinase family. Homoserine kinase subfamily.

The protein localises to the cytoplasm. The catalysed reaction is L-homoserine + ATP = O-phospho-L-homoserine + ADP + H(+). Its pathway is amino-acid biosynthesis; L-threonine biosynthesis; L-threonine from L-aspartate: step 4/5. Catalyzes the ATP-dependent phosphorylation of L-homoserine to L-homoserine phosphate. This chain is Homoserine kinase, found in Salmonella arizonae (strain ATCC BAA-731 / CDC346-86 / RSK2980).